The primary structure comprises 463 residues: Adenosylhomocysteinase (463 aa).

Positions 54, 128, and 189 each coordinate substrate. NAD(+) is bound at residue 190-192; the sequence is TTT. The substrate site is built by K219 and D223. NAD(+) is bound by residues N224, 253–258, E276, N311, 332–334, and N377; these read GYGDVG and IGH.

The protein belongs to the adenosylhomocysteinase family. The cofactor is NAD(+).

The protein localises to the cytoplasm. The enzyme catalyses S-adenosyl-L-homocysteine + H2O = L-homocysteine + adenosine. It participates in amino-acid biosynthesis; L-homocysteine biosynthesis; L-homocysteine from S-adenosyl-L-homocysteine: step 1/1. Its function is as follows. May play a key role in the regulation of the intracellular concentration of adenosylhomocysteine. The polypeptide is Adenosylhomocysteinase (Cereibacter sphaeroides (Rhodobacter sphaeroides)).